We begin with the raw amino-acid sequence, 417 residues long: CinA-like protein (417 aa).

Belongs to the CinA family.

The protein is CinA-like protein of Leptospira biflexa serovar Patoc (strain Patoc 1 / Ames).